The primary structure comprises 575 residues: Lysine--tRNA ligase (575 aa).

Mg(2+) contacts are provided by Glu412 and Glu419.

It belongs to the class-II aminoacyl-tRNA synthetase family. In terms of assembly, homodimer. The cofactor is Mg(2+).

It is found in the cytoplasm. It catalyses the reaction tRNA(Lys) + L-lysine + ATP = L-lysyl-tRNA(Lys) + AMP + diphosphate. The sequence is that of Lysine--tRNA ligase from Bacteroides fragilis (strain YCH46).